Here is a 427-residue protein sequence, read N- to C-terminus: Serine--tRNA ligase (427 aa).

230 to 232 (TSE) lines the L-serine pocket. 261 to 263 (RSE) is a binding site for ATP. Glu-284 contacts L-serine. 348 to 351 (EISS) contributes to the ATP binding site. Ser-384 contacts L-serine.

Belongs to the class-II aminoacyl-tRNA synthetase family. Type-1 seryl-tRNA synthetase subfamily. In terms of assembly, homodimer. The tRNA molecule binds across the dimer.

The protein localises to the cytoplasm. The enzyme catalyses tRNA(Ser) + L-serine + ATP = L-seryl-tRNA(Ser) + AMP + diphosphate + H(+). It catalyses the reaction tRNA(Sec) + L-serine + ATP = L-seryl-tRNA(Sec) + AMP + diphosphate + H(+). Its pathway is aminoacyl-tRNA biosynthesis; selenocysteinyl-tRNA(Sec) biosynthesis; L-seryl-tRNA(Sec) from L-serine and tRNA(Sec): step 1/1. In terms of biological role, catalyzes the attachment of serine to tRNA(Ser). Is also able to aminoacylate tRNA(Sec) with serine, to form the misacylated tRNA L-seryl-tRNA(Sec), which will be further converted into selenocysteinyl-tRNA(Sec). The polypeptide is Serine--tRNA ligase (Desulforapulum autotrophicum (strain ATCC 43914 / DSM 3382 / VKM B-1955 / HRM2) (Desulfobacterium autotrophicum)).